The sequence spans 660 residues: Phosphatidylinositol-3-phosphate phosphatase MTMR7 (660 aa).

In terms of domain architecture, Myotubularin phosphatase spans 126-504 (GWVLIDLSEE…FMYKFWSGMY (379 aa)). The a 1,2-diacyl-sn-glycero-3-phospho-(1D-myo-inositol-3-phosphate) site is built by Asn250, Asn275, and Ile276. Cys338 serves as the catalytic Phosphocysteine intermediate. A 1,2-diacyl-sn-glycero-3-phospho-(1D-myo-inositol-3-phosphate) contacts are provided by Ser339, Asp340, Gly341, Trp342, Asp343, Arg344, and Arg384. The stretch at 521-551 (LMAVKEETQQLEEELEALEERLEKIQKVQLN) forms a coiled coil. The segment at 554–660 (KVKSKQSEPS…DSDEAVFLTA (107 aa)) is disordered. The segment covering 566-596 (SGFSTSDNSIANTPQDYSGNMKSFPSRSPSQ) has biased composition (polar residues). Residue Thr578 is modified to Phosphothreonine. Residues 641 to 653 (APSEDSGKDRDSD) show a composition bias toward basic and acidic residues.

This sequence belongs to the protein-tyrosine phosphatase family. Non-receptor class myotubularin subfamily. In terms of assembly, heterodimer (via C-terminus) with MTMR9 (via coiled coil domain); the interaction enhances MTMR7 catalytic activity. Does not homodimerize. Interacts with RAB1B (in GDP-bound form). In terms of tissue distribution, expressed specifically in brain.

The protein resides in the cytoplasm. The protein localises to the endomembrane system. The catalysed reaction is a 1,2-diacyl-sn-glycero-3-phospho-(1D-myo-inositol-3-phosphate) + H2O = a 1,2-diacyl-sn-glycero-3-phospho-(1D-myo-inositol) + phosphate. It carries out the reaction 1D-myo-inositol 1,3-bisphosphate + H2O = 1D-myo-inositol 1-phosphate + phosphate. With respect to regulation, interaction with MTMR9 increases phosphatase activity. Functionally, lipid phosphatase that specifically dephosphorylates the D-3 position of phosphatidylinositol 3-phosphate (PtdIns(3)P) and inositol 1,3-bisphosphate (Ins(1,3)P2). This Homo sapiens (Human) protein is Phosphatidylinositol-3-phosphate phosphatase MTMR7.